The following is a 438-amino-acid chain: (3,5-dihydroxyphenyl)acetyl-CoA 1,2-dioxygenase (438 aa).

Substrate-binding positions include D183, E189, 222–225 (HPRY), 233–238 (AGINLK), G296, 325–327 (IPG), and Q416.

This sequence belongs to the enoyl-CoA hydratase/isomerase family. In terms of assembly, homohexamer; dimer of trimers.

The enzyme catalyses (3,5-dihydroxyphenyl)acetyl-CoA + O2 = 2-(3,5-dihydroxyphenyl)-2-oxoacetate + CoA + H(+). Its activity is regulated as follows. Inhibited by DPA-S-(N-acetylcysteamine). Its function is as follows. Involved in the biosynthesis of the nonproteinogenic amino acid monomer (S)-3,5-dihydroxyphenylglycine (Dpg) responsible of the production of vancomycin and teicoplanin antibiotics. Catalyzes the unusual conversion 3,5-dihydroxyphenylacetyl-CoA (DPA-CoA) to 3,5-dihydroxyphenylglyoxylate. DpgC performed a net four-electron oxidation of the benzylic carbon of DPA-CoA and the hydrolysis of the thioester bond to generate free CoA. DpgC has the ability to process a diverse range of substituted phenylacetyl-CoA substrates. This is (3,5-dihydroxyphenyl)acetyl-CoA 1,2-dioxygenase from Streptomyces toyocaensis.